We begin with the raw amino-acid sequence, 360 residues long: UDP-N-acetylglucosamine--N-acetylmuramyl-(pentapeptide) pyrophosphoryl-undecaprenol N-acetylglucosamine transferase (360 aa).

UDP-N-acetyl-alpha-D-glucosamine contacts are provided by serine 198 and glutamine 289.

The protein belongs to the glycosyltransferase 28 family. MurG subfamily.

Its subcellular location is the cell membrane. It carries out the reaction Mur2Ac(oyl-L-Ala-gamma-D-Glu-L-Lys-D-Ala-D-Ala)-di-trans,octa-cis-undecaprenyl diphosphate + UDP-N-acetyl-alpha-D-glucosamine = beta-D-GlcNAc-(1-&gt;4)-Mur2Ac(oyl-L-Ala-gamma-D-Glu-L-Lys-D-Ala-D-Ala)-di-trans,octa-cis-undecaprenyl diphosphate + UDP + H(+). It participates in cell wall biogenesis; peptidoglycan biosynthesis. Its function is as follows. Cell wall formation. Catalyzes the transfer of a GlcNAc subunit on undecaprenyl-pyrophosphoryl-MurNAc-pentapeptide (lipid intermediate I) to form undecaprenyl-pyrophosphoryl-MurNAc-(pentapeptide)GlcNAc (lipid intermediate II). In Streptococcus pyogenes serotype M5 (strain Manfredo), this protein is UDP-N-acetylglucosamine--N-acetylmuramyl-(pentapeptide) pyrophosphoryl-undecaprenol N-acetylglucosamine transferase.